Reading from the N-terminus, the 379-residue chain is ATP-sensitive inward rectifier potassium channel 10 (379 aa).

Residues 1-61 (MTSVAKVYYS…LKDLWTTFID (61 aa)) are Cytoplasmic-facing. Arg-36 lines the 1,2-dioctanoyl-sn-glycero-3-phospho-(1D-myo-inositol-4,5-bisphosphate) pocket. The chain crosses the membrane as a helical span at residues 62 to 88 (MQWRYKLLLFSATFAGTWFLFGVVWYL). The Extracellular portion of the chain corresponds to 89-114 (VAVAHGDLLELGPPANHTPCVVQVHT). Cysteines 108 and 140 form a disulfide. The discontinuously helical; Pore-forming intramembrane region spans 115–131 (LTGAFLFSLESQTTIGY). The Selectivity filter motif lies at 128-133 (TIGYGF). The Extracellular portion of the chain corresponds to 132-140 (GFRYISEEC). A helical transmembrane segment spans residues 141 to 166 (PLAIVLLIAQLVLTTILEIFITGTFL). Residues 167–379 (AKIARPKKRA…SALSVRISNV (213 aa)) are Cytoplasmic-facing. Positions 168, 171, and 173 each coordinate 1,2-dioctanoyl-sn-glycero-3-phospho-(1D-myo-inositol-4,5-bisphosphate). An ATP-binding site is contributed by 210-217 (GCQVTGKL).

Belongs to the inward rectifier-type potassium channel (TC 1.A.2.1) family. KCNJ10 subfamily. As to quaternary structure, homotetramer. In kidney cells, it forms heteromeric channels with Kir5.1/KCNJ16; this interaction is required for KCNJ16 localization to the basolateral membrane. Interacts with MAGI1, alone and possibly as a heteromer with KCNJ16; this interaction may facilitate KCNJ10/KCNJ16 potassium channel expression at the basolateral membrane in kidney cells. Interacts with PATJ. As to expression, widely expressed in adult brain, including in the neocortex, the stratum pyrimadale of the hippocampus and the piriform cortex. Expressed by cultured astrocytes and also by cocultured cortical neurons (at protein level). In the distal segment of the nephron, expressed in the distal convoluted tubule, the connecting tubule, and the early cortical collecting duct.

The protein resides in the membrane. The protein localises to the basolateral cell membrane. It catalyses the reaction K(+)(in) = K(+)(out). With respect to regulation, channel activity is strongly regulated by variations of cytosolic pH; channels are activated by alkaline and inhibited by acidic pH values. Activated by phosphatidylinositol 4,5 biphosphate (PtdIns(4,5)P2). Inhibited by Ba(2+) and Cs(+). Functionally, may be responsible for potassium buffering action of glial cells in the brain. Inward rectifier potassium channels are characterized by a greater tendency to allow potassium to flow into the cell rather than out of it. Their voltage dependence is regulated by the concentration of extracellular potassium; as external potassium is raised, the voltage range of the channel opening shifts to more positive voltages. The inward rectification is mainly due to the blockage of outward current by internal magnesium. Can be blocked by extracellular barium and cesium. In the kidney, together with KCNJ16, mediates basolateral K(+) recycling in distal tubules; this process is critical for Na(+) reabsorption at the tubules. The protein is ATP-sensitive inward rectifier potassium channel 10 of Mus musculus (Mouse).